Reading from the N-terminus, the 255-residue chain is Type III pantothenate kinase (255 aa).

Residue 6–13 (DIGNTNIK) coordinates ATP. 107-110 (GADR) is a binding site for substrate. Aspartate 109 acts as the Proton acceptor in catalysis. Residue threonine 132 participates in ATP binding. Threonine 184 serves as a coordination point for substrate.

This sequence belongs to the type III pantothenate kinase family. Homodimer. The cofactor is NH4(+). K(+) is required as a cofactor.

It is found in the cytoplasm. It catalyses the reaction (R)-pantothenate + ATP = (R)-4'-phosphopantothenate + ADP + H(+). It functions in the pathway cofactor biosynthesis; coenzyme A biosynthesis; CoA from (R)-pantothenate: step 1/5. In terms of biological role, catalyzes the phosphorylation of pantothenate (Pan), the first step in CoA biosynthesis. The polypeptide is Type III pantothenate kinase (Roseiflexus castenholzii (strain DSM 13941 / HLO8)).